The chain runs to 506 residues: ATP synthase subunit alpha (506 aa).

170 to 177 (GDRQTGKT) contacts ATP.

Belongs to the ATPase alpha/beta chains family. In terms of assembly, F-type ATPases have 2 components, CF(1) - the catalytic core - and CF(0) - the membrane proton channel. CF(1) has five subunits: alpha(3), beta(3), gamma(1), delta(1), epsilon(1). CF(0) has four main subunits: a(1), b(1), b'(1) and c(9-12).

Its subcellular location is the cellular thylakoid membrane. The enzyme catalyses ATP + H2O + 4 H(+)(in) = ADP + phosphate + 5 H(+)(out). Its function is as follows. Produces ATP from ADP in the presence of a proton gradient across the membrane. The alpha chain is a regulatory subunit. The polypeptide is ATP synthase subunit alpha (Parasynechococcus marenigrum (strain WH8102)).